The following is a 155-amino-acid chain: Microsomal glutathione S-transferase 1 (155 aa).

At 3-9 (DLTQVMD) the chain is on the lumenal side. A helical membrane pass occupies residues 10–33 (DEVFMAFASYATIILSKMMLMSTA). The Cytoplasmic segment spans residues 34 to 62 (TAFYRLTRKVFANPEDCVAFGKGENAKKY). Residue R38 participates in glutathione binding. N6-acetyllysine is present on residues K42, K55, and K60. Residues 63–96 (LRTDDRVERVRRAHLNDLENIIPFLGIGLLYSLS) traverse the membrane as a helical segment. Glutathione is bound by residues R73, R74, H76, and E81. Residues 97–99 (GPD) lie on the Lumenal side of the membrane. A helical transmembrane segment spans residues 100–123 (PSTAILHFRLFVGARIYHTIAYLT). Y121 lines the glutathione pocket. The Cytoplasmic portion of the chain corresponds to 124–128 (PLPQP). A helical transmembrane segment spans residues 129-148 (NRALSFFVGYGVTLSMAYRL). Topologically, residues 149–155 (LKSKLYL) are lumenal.

This sequence belongs to the MAPEG family. In terms of assembly, homotrimer; The trimer binds only one molecule of glutathione. As to expression, highly expressed in liver.

Its subcellular location is the endoplasmic reticulum membrane. The protein resides in the mitochondrion outer membrane. The catalysed reaction is RX + glutathione = an S-substituted glutathione + a halide anion + H(+). Functionally, conjugation of reduced glutathione to a wide number of exogenous and endogenous hydrophobic electrophiles. In Homo sapiens (Human), this protein is Microsomal glutathione S-transferase 1 (MGST1).